We begin with the raw amino-acid sequence, 185 residues long: Ion-translocating oxidoreductase complex subunit B (185 aa).

Positions Met1–Ala26 are hydrophobic. The 4Fe-4S domain maps to Glu32–Val90. [4Fe-4S] cluster-binding residues include Cys49, Cys52, Cys57, Cys73, Cys115, Cys118, Cys121, Cys125, Cys145, Cys148, Cys151, and Cys155. 2 4Fe-4S ferredoxin-type domains span residues Arg106–Lys135 and Leu136–Leu165.

The protein belongs to the 4Fe4S bacterial-type ferredoxin family. RnfB subfamily. As to quaternary structure, the complex is composed of six subunits: RnfA, RnfB, RnfC, RnfD, RnfE and RnfG. Requires [4Fe-4S] cluster as cofactor.

The protein resides in the cell inner membrane. In terms of biological role, part of a membrane-bound complex that couples electron transfer with translocation of ions across the membrane. The sequence is that of Ion-translocating oxidoreductase complex subunit B from Tolumonas auensis (strain DSM 9187 / NBRC 110442 / TA 4).